We begin with the raw amino-acid sequence, 913 residues long: MGDPDLLEVLAEEGEKVNKHIDYSFQMSEQSLSSRETSFLINEETMPAKRFNLFLRRRLMFQKNQQSKDSIFFRDGIRQIDFVLSYVDDVKKDAELKAERRKEFETNLRKTGLELEIEDKRDSEDGRTYFVKIHAPWEVLVTYAEVLGIKMPIKESDIPRPKHTPISYVLGPVRLPLSVKYPHPEYFTAQFSRHRQELFLIEDQATFFPSSSRNRIVYYILSRCPFGIEDGKKRFGIERLLNSNTYSSAYPLHDGQYWKPSEPPNPTNERYTLHQNWARFSYFYKEQPLDLIKNYYGEKIGIYFVFLGFYTEMLFFAAVVGLACFIYGLLSMEHNTSSTEICDPEIGGQMIMCPLCDQVCDYWRLNSTCLASKFSHLFDNESTVFFAIFMGIWVTLFLEFWKQRQARLEYEWDLVDFEEEQQQLQLRPEFEAMCKHRKLNAVTKEMEPYMPLYTRIPWYFLSGATVTLWMSLVVTSMVAVIVYRLSVFATFASFMESDASLKQVKSFLTPQITTSLTGSCLNFIVILILNFFYEKISAWITKMEIPRTYQEYESSLTLKMFLFQFVNFYSSCFYVAFFKGKFVGYPGKYTYLFNEWRSEECDPGGCLIELTTQLTIIMTGKQIFGNIKEAIYPLALNWWRRRKARTNSEKLYSRWEQDHDLESFGPLGLFYEYLETVTQFGFVTLFVASFPLAPLLALINNIVEIRVDAWKLTTQYRRTVASKAHSIGVWQDILYGMAVLSVATNAFIVAFTSDIIPRLVYYYAYSTNATQPMTGYVNNSLSVFLIADFPNHTAPSEKRDFITCRYRDYRYPPDDENKYFHNMQFWHVLAAKMTFIIVMEHVVFLVKFLLAWMIPDVPKDVVERIKREKLMTIKILHDFELNKLKENLGINSNEFAKHVMIEENKAQLAKSTL.

At 1-299 the chain is on the cytoplasmic side; sequence MGDPDLLEVL…DLIKNYYGEK (299 aa). The helical transmembrane segment at 300 to 320 threads the bilayer; that stretch reads IGIYFVFLGFYTEMLFFAAVV. Residues 321–380 lie on the Extracellular side of the membrane; that stretch reads GLACFIYGLLSMEHNTSSTEICDPEIGGQMIMCPLCDQVCDYWRLNSTCLASKFSHLFDN. Residues Asn-335, Asn-366, and Asn-380 are each glycosylated (N-linked (GlcNAc...) asparagine). Residues 381-401 form a helical membrane-spanning segment; that stretch reads ESTVFFAIFMGIWVTLFLEFW. Residues 402-462 lie on the Cytoplasmic side of the membrane; it reads KQRQARLEYE…YTRIPWYFLS (61 aa). A helical transmembrane segment spans residues 463–483; the sequence is GATVTLWMSLVVTSMVAVIVY. Topologically, residues 484–511 are extracellular; that stretch reads RLSVFATFASFMESDASLKQVKSFLTPQ. The chain crosses the membrane as a helical span at residues 512 to 532; that stretch reads ITTSLTGSCLNFIVILILNFF. Residues 533-557 are Cytoplasmic-facing; it reads YEKISAWITKMEIPRTYQEYESSLT. A helical membrane pass occupies residues 558–578; it reads LKMFLFQFVNFYSSCFYVAFF. The Extracellular segment spans residues 579 to 679; that stretch reads KGKFVGYPGK…FYEYLETVTQ (101 aa). A helical membrane pass occupies residues 680 to 700; that stretch reads FGFVTLFVASFPLAPLLALIN. Residues 701 to 732 are Cytoplasmic-facing; that stretch reads NIVEIRVDAWKLTTQYRRTVASKAHSIGVWQD. A helical membrane pass occupies residues 733-753; sequence ILYGMAVLSVATNAFIVAFTS. The Extracellular segment spans residues 754 to 834; the sequence is DIIPRLVYYY…FWHVLAAKMT (81 aa). N-linked (GlcNAc...) asparagine glycans are attached at residues Asn-768, Asn-778, and Asn-791. A helical transmembrane segment spans residues 835–855; that stretch reads FIIVMEHVVFLVKFLLAWMIP. The Cytoplasmic segment spans residues 856-913; the sequence is DVPKDVVERIKREKLMTIKILHDFELNKLKENLGINSNEFAKHVMIEENKAQLAKSTL.

The protein belongs to the anoctamin family. Highly expressed in brain, heart, kidney, lung, and skeletal muscle. Weakly expressed in bone marrow, fetal liver, placenta, spleen, thymus, osteoblasts and periodontal ligament cells.

Its subcellular location is the endoplasmic reticulum membrane. It is found in the cell membrane. Plays a role in plasma membrane repair in a process involving annexins. Does not exhibit calcium-activated chloride channel (CaCC) activity. The polypeptide is Anoctamin-5 (ANO5) (Homo sapiens (Human)).